We begin with the raw amino-acid sequence, 261 residues long: Troponin T, slow skeletal muscle (261 aa).

Acidic residues predominate over residues 1 to 30; sequence MSDTEEQEYEEEQAEDEEAVEEEAPEEPEP. Disordered regions lie at residues 1 to 61 and 108 to 152; these read MSDT…ERVD and ERAE…KKKV. Serine 2 carries the phosphoserine; by CK2 modification. The span at 31 to 40 shows a compositional bias: basic and acidic residues; it reads VAEREEERPK. Over residues 42–54 the composition is skewed to pro residues; sequence SRPVVPPLIPPKI. The segment covering 108–148 has biased composition (basic and acidic residues); the sequence is ERAEQQRFRTEKERERQAKLAEEKMRKEEEEAKKRAEDDAK.

This sequence belongs to the troponin T family. In terms of assembly, interacts with TPM3. In terms of tissue distribution, expressed in soleus muscle. Isoform 4 is predominantly expressed in fast muscles.

Functionally, troponin T is the tropomyosin-binding subunit of troponin, the thin filament regulatory complex which confers calcium-sensitivity to striated muscle actomyosin ATPase activity. This chain is Troponin T, slow skeletal muscle (Tnnt1), found in Rattus norvegicus (Rat).